Here is a 137-residue protein sequence, read N- to C-terminus: Ig heavy chain V region MOPC 315 (137 aa).

The N-terminal stretch at 1-18 (MKVLSLLYLLTAIPGIMS) is a signal peptide. The tract at residues 19–48 (DVQLQESGPGLVKPSQSLSLTCSVTGYSIT) is framework-1. A disulfide bond links Cys-40 and Cys-114. A complementarity-determining-1 region spans residues 49–54 (SGYFWN). The interval 55–68 (WIRQFPGNKLEWLG) is framework-2. A complementarity-determining-2 region spans residues 69–84 (FIKYDGSNGYNPSLKN). The segment at 85–116 (RVSITRDTSENQFFLKLNSVTTEDTATYYCAG) is framework-3. A complementarity-determining-3 region spans residues 117-126 (DNDHLYYFDY). The tract at residues 127 to 137 (WGQGTTLTVSS) is framework-4.

The sequence is that of Ig heavy chain V region MOPC 315 from Mus musculus (Mouse).